Consider the following 1209-residue polypeptide: MANGGGGGGGSSGGGGGGGGGSGLRMSSNIHANNLSLDASSSSSSSSSSSSSSSSSSSSSVHEPKMDALIIPVTMEVPCDSRGQRMWWAFLASSMVTFFGGLFIILLWRTLKYLWTVCCHCGGKTKEAQKINNGSSQADGTLKPVDEKEEVVAAEVGWMTSVKDWAGVMISAQTLTGRVLVVLVFALSIGALVIYFIDSSNPIESCQNFYKDFTLQIDMAFNVFFLLYFGLRFIAANDKLWFWLEVNSVVDFFTVPPVFVSVYLNRSWLGLRFLRALRLIQFSEILQFLNILKTSNSIKLVNLLSIFISTWLTAAGFIHLVENSGDPWENFQNNQALTYWECVYLLMVTMSTVGYGDVYAKTTLGRLFMVFFILGGLAMFASYVPEIIELIGNRKKYGGSYSAVSGRKHIVVCGHITLESVSNFLKDFLHKDRDDVNVEIVFLHNISPNLELEALFKRHFTQVEFYQGSVLNPHDLARVKIESADACLILANKYCADPDAEDASNIMRVISIKNYHPKIRIITQMLQYHNKAHLLNIPSWNWKEGDDAICLAELKLGFIAQSCLAQGLSTMLANLFSMRSFIKIEEDTWQKYYLEGVSNEMYTEYLSSAFVGLSFPTVCELCFVKLKLLMIAIEYKSANRESRSRKRILINPGNHLKIQEGTLGFFIASDAKEVKRAFFYCKACHDDVTDPKRIKKCGCRRLEDEQPPTLSPKKKQRNGGMRNSPNTSPKLMRHDPLLIPGNDQIDNMDSNVKKYDSTGMFHWCAPKEIEKVILTRSEAAMTVLSGHVVVCIFGDVSSALIGLRNLVMPLRASNFHYHELKHIVFVGSIEYLKREWETLHNFPKVSILPGTPLSRADLRAVNINLCDMCVILSANQNNIDDTSLQDKECILASLNIKSMQFDDSIGVLQANSQGFTPPGMDRSSPDNSPVHGMLRQPSITTGVNIPIITELAKPGKLPLVSVNQEKNSGTHILMITELVNDTNVQFLDQDDDDDPDTELYLTQPFACGTAFAVSVLDSLMSATYFNDNILTLIRTLVTGGATPELEALIAEENALRGGYSTPQTLANRDRCRVAQLALLDGPFADLGDGGCYGDLFCKALKTYNMLCFGIYRLRDAHLSTPSQCTKRYVITNPPYEFELVPTDLIFCLMQFDHNAGQSRASLSHSSHSSQSSSKKSSSVHSIPSTANRPNRPKSRESRDKQNRKEMVYR.

Residues 1 to 23 (MANGGGGGGGSSGGGGGGGGGSG) show a composition bias toward gly residues. The interval 1-61 (MANGGGGGGG…SSSSSSSSSV (61 aa)) is disordered. Residues 1–86 (MANGGGGGGG…VPCDSRGQRM (86 aa)) lie on the Extracellular side of the membrane. Residues 25–39 (RMSSNIHANNLSLDA) show a composition bias toward polar residues. The segment covering 40-60 (SSSSSSSSSSSSSSSSSSSSS) has biased composition (low complexity). The chain crosses the membrane as a helical span at residues 87-107 (WWAFLASSMVTFFGGLFIILL). Over 108–178 (WRTLKYLWTV…MISAQTLTGR (71 aa)) the chain is Cytoplasmic. Residues Cys118, Cys119, and Cys121 are each lipidated (S-palmitoyl cysteine). The helical transmembrane segment at 179–199 (VLVVLVFALSIGALVIYFIDS) threads the bilayer. At 200–214 (SNPIESCQNFYKDFT) the chain is on the extracellular side. The helical transmembrane segment at 215–235 (LQIDMAFNVFFLLYFGLRFIA) threads the bilayer. The Cytoplasmic segment spans residues 236–239 (ANDK). The chain crosses the membrane as a helical span at residues 240–260 (LWFWLEVNSVVDFFTVPPVFV). Over 261–264 (SVYL) the chain is Extracellular. Residues 265-285 (NRSWLGLRFLRALRLIQFSEI) traverse the membrane as a helical; Voltage-sensor segment. Residues 286–300 (LQFLNILKTSNSIKL) lie on the Cytoplasmic side of the membrane. A helical membrane pass occupies residues 301–321 (VNLLSIFISTWLTAAGFIHLV). Over 322–335 (ENSGDPWENFQNNQ) the chain is Extracellular. The segment at residues 336 to 358 (ALTYWECVYLLMVTMSTVGYGDV) is an intramembrane region (pore-forming). The Selectivity for potassium motif lies at 352-355 (TVGY). Residues 359 to 367 (YAKTTLGRL) lie on the Extracellular side of the membrane. Residues 368–388 (FMVFFILGGLAMFASYVPEII) form a helical membrane-spanning segment. Residues 389-1209 (ELIGNRKKYG…KQNRKEMVYR (821 aa)) are Cytoplasmic-facing. Positions 407–549 (RKHIVVCGHI…WNWKEGDDAI (143 aa)) constitute an RCK N-terminal 1 domain. Mg(2+)-binding residues include Glu439, Gln462, and Glu464. A segment S7 region spans residues 556-576 (LGFIAQSCLAQGLSTMLANLF). The interval 613 to 633 (LSFPTVCELCFVKLKLLMIAI) is segment S8. A Phosphothreonine modification is found at Asp670. Residue Lys672 is modified to Phosphoserine. Residues 681-685 (CKACH) are heme-binding motif. A disordered region spans residues 703–733 (EDEQPPTLSPKKKQRNGGMRNSPNTSPKLMR). Residue Thr709 is modified to Phosphothreonine. Phosphoserine occurs at positions 711, 724, and 728. Positions 783–803 (VLSGHVVVCIFGDVSSALIGL) are segment S9. The RCK N-terminal 2 domain occupies 785-929 (SGHVVVCIFG…MDRSSPDNSP (145 aa)). A Phosphothreonine modification is found at Thr916. Residues Ser924 and Ser928 each carry the phosphoserine modification. Positions 976–998 (TELVNDTNVQFLDQDDDDDPDTE) match the Calcium bowl motif. 4 residues coordinate Ca(2+): Gln985, Asp988, Asp991, and Asp993. The segment at 1005–1025 (FACGTAFAVSVLDSLMSATYF) is segment S10. Residues 1159-1184 (RASLSHSSHSSQSSSKKSSSVHSIPS) are compositionally biased toward low complexity. Residues 1159-1209 (RASLSHSSHSSQSSSKKSSSVHSIPSTANRPNRPKSRESRDKQNRKEMVYR) are disordered. Over residues 1193–1209 (KSRESRDKQNRKEMVYR) the composition is skewed to basic and acidic residues. Residues Ser1194 and Ser1197 each carry the phosphoserine modification.

It belongs to the potassium channel family. Calcium-activated (TC 1.A.1.3) subfamily. KCa1.1/KCNMA1 sub-subfamily. As to quaternary structure, homotetramer; which constitutes the calcium-activated potassium channel. Interacts with beta subunits KCNMB1, KCNMB2, KCNMB3 and KCNMB4. Interacts with gamma subunits LRRC26, LRRC38, LRRC52 and LRRC55. Beta and gamma subunits are accessory, and modulate its activity. Interacts with RAB11B. In terms of processing, phosphorylated. Phosphorylation by kinases such as PKA and/or PKG. In smooth muscles, phosphorylation affects its activity. Post-translationally, palmitoylation by ZDHHC22 and ZDHHC23 within the intracellular linker between the S0 and S1 transmembrane domains regulates localization to the plasma membrane. Depalmitoylated by LYPLA1 and LYPLAL1, leading to retard exit from the trans-Golgi network.

It is found in the cell membrane. It catalyses the reaction K(+)(in) = K(+)(out). With respect to regulation, ethanol and carbon monoxide-bound heme increase channel activation. Heme inhibits channel activation. In terms of biological role, potassium channel activated by both membrane depolarization or increase in cytosolic Ca(2+) that mediates export of K(+). It is also activated by the concentration of cytosolic Mg(2+). Its activation dampens the excitatory events that elevate the cytosolic Ca(2+) concentration and/or depolarize the cell membrane. It therefore contributes to repolarization of the membrane potential. Plays a key role in controlling excitability in a number of systems, such as regulation of the contraction of smooth muscle, the tuning of hair cells in the cochlea, regulation of transmitter release, and innate immunity. In smooth muscles, its activation by high level of Ca(2+), caused by ryanodine receptors in the sarcoplasmic reticulum, regulates the membrane potential. In cochlea cells, its number and kinetic properties partly determine the characteristic frequency of each hair cell and thereby helps to establish a tonotopic map. Kinetics of KCNMA1 channels are determined by alternative splicing, phosphorylation status and its combination with modulating beta subunits. Highly sensitive to both iberiotoxin (IbTx) and charybdotoxin (CTX). Potassium channel activated by both membrane depolarization or increase in cytosolic Ca(2+) that mediates export of K(+). The polypeptide is Calcium-activated potassium channel subunit alpha-1 (Kcnma1) (Mus musculus (Mouse)).